A 378-amino-acid polypeptide reads, in one-letter code: Chloroplast stem-loop binding protein of 41 kDa b, chloroplastic (378 aa).

Residues 1 to 50 (MAKMMMLQQHQPSFSLLTSSLSDFNGAKLHLQVQYKRKVHQPKGALYVSA) constitute a chloroplast transit peptide. Ser-240 carries the phosphoserine modification.

It belongs to the NAD(P)-dependent epimerase/dehydratase family. Component of a complex made of CSP41A, CSP41B, ribosomes, and the plastid-encoded RNA polymerase. Interacts with CSP41A. Binds DNA when in complex with PRIN2. As to expression, highly expressed in seedlings, particularly in photosynthetically active organs. Mostly expressed in young and mature leaves, and, to a lower extent, in flowers. Low expression in etiolated seedlings compared to green seedlings.

The protein resides in the plastid. The protein localises to the chloroplast. It is found in the plastoglobule. Its subcellular location is the cytoplasm. Its function is as follows. Binds and cleaves RNA, particularly in stem-loops. Associates with pre-ribosomal particles in chloroplasts, and participates in chloroplast ribosomal RNA metabolism, probably during the final steps of 23S rRNA maturation. May enhance transcription by the plastid-encoded polymerase and translation in plastid via the stabilization of ribosome assembly intermediates. Required for chloroplast integrity. Involved in the regulation of the circadian system. Involved in the regulation of heteroglycans and monosaccharide mobilization. Required for full expression of genes transcribed by the plastid-encoded RNA polymerase (PEP). Essential for embryo development. This is Chloroplast stem-loop binding protein of 41 kDa b, chloroplastic (CSP41B) from Arabidopsis thaliana (Mouse-ear cress).